A 190-amino-acid chain; its full sequence is Adenylate kinase (190 aa).

11 to 16 (GSGKGT) lines the ATP pocket. The NMP stretch occupies residues 31–60 (STGDVLRGEMKAETELGKIAKDYIEKGQLV). AMP-binding positions include Thr32, Arg37, 58–60 (QLV), 86–89 (GFPR), and Gln93. Positions 127-137 (ERGKVSGRSDD) are LID. Arg128 provides a ligand contact to ATP. Positions 134 and 145 each coordinate AMP. Gly173 contacts ATP.

This sequence belongs to the adenylate kinase family. As to quaternary structure, monomer.

The protein localises to the cytoplasm. It catalyses the reaction AMP + ATP = 2 ADP. The protein operates within purine metabolism; AMP biosynthesis via salvage pathway; AMP from ADP: step 1/1. Functionally, catalyzes the reversible transfer of the terminal phosphate group between ATP and AMP. Plays an important role in cellular energy homeostasis and in adenine nucleotide metabolism. The chain is Adenylate kinase from Parabacteroides distasonis (strain ATCC 8503 / DSM 20701 / CIP 104284 / JCM 5825 / NCTC 11152).